The primary structure comprises 207 residues: Adenylyl-sulfate kinase (207 aa).

G34–S41 lines the ATP pocket. S108 serves as the catalytic Phosphoserine intermediate.

It belongs to the APS kinase family.

It catalyses the reaction adenosine 5'-phosphosulfate + ATP = 3'-phosphoadenylyl sulfate + ADP + H(+). It functions in the pathway sulfur metabolism; hydrogen sulfide biosynthesis; sulfite from sulfate: step 2/3. In terms of biological role, catalyzes the synthesis of activated sulfate. This Lactiplantibacillus plantarum (strain ATCC BAA-793 / NCIMB 8826 / WCFS1) (Lactobacillus plantarum) protein is Adenylyl-sulfate kinase.